Reading from the N-terminus, the 360-residue chain is Galactoside alpha-(1,2)-fucosyltransferase 1 (360 aa).

Residues 1 to 8 (MWAPGHHH) are Cytoplasmic-facing. The helical; Signal-anchor for type II membrane protein transmembrane segment at 9–27 (LCLIFLLTCVFACVFFLLI) threads the bilayer. The Lumenal segment spans residues 28–360 (HQNLFHSGLD…GINADLSPLQ (333 aa)). N-linked (GlcNAc...) asparagine glycosylation is found at asparagine 65, asparagine 301, and asparagine 327.

It belongs to the glycosyltransferase 11 family. In terms of tissue distribution, expressed in brain, intestine and kidney.

It localises to the golgi apparatus. The protein localises to the golgi stack membrane. It catalyses the reaction a ganglioside GM1 + GDP-beta-L-fucose = a ganglioside Fuc-GM1 + GDP + H(+). The enzyme catalyses a beta-D-galactosyl-(1-&gt;4)-N-acetyl-beta-D-glucosaminyl derivative + GDP-beta-L-fucose = an alpha-L-Fuc-(1-&gt;2)-beta-D-Gal-(1-&gt;4)-beta-D-GlcNAc derivative + GDP + H(+). It carries out the reaction a ganglioside GA1 + GDP-beta-L-fucose = a ganglioside Fuc-GA1 + GDP + H(+). The catalysed reaction is a beta-D-Gal-(1-&gt;3)-beta-D-GlcNAc-(1-&gt;3)-beta-D-Gal-(1-&gt;4)-beta-D-Glc-(1&lt;-&gt;1')-Cer(d18:1(4E)) + GDP-beta-L-fucose = alpha-L-fucosyl-(1-&gt;2)- beta-D-galactosyl-(1-&gt;3)-N-acetyl-beta-D-glucosaminyl-(1-&gt;3)-beta-D-galactosyl-(1-&gt;4)-beta-D-glucosyl-(1&lt;-&gt;1')-N-acylsphing-4-enine + GDP + H(+). It catalyses the reaction a neolactoside nLc4Cer(d18:1(4E)) + GDP-beta-L-fucose = a neolactoside IV(2)-alpha-Fuc-nLc4Cer(d18:1(4E)) + GDP + H(+). The enzyme catalyses beta-D-galactosyl-(1-&gt;3)-N-acetyl-D-galactosamine + GDP-beta-L-fucose = alpha-L-fucosyl-(1-&gt;2)-beta-D-galactosyl-(1-&gt;3)-N-acetyl-D-galactosamine + GDP + H(+). It participates in protein modification; protein glycosylation. Its function is as follows. Catalyzes the transfer of L-fucose, from a guanosine diphosphate-beta-L-fucose, to the terminal galactose residue of glycoconjugates through an alpha(1,2) linkage leading to H antigen synthesis that is an intermediate substrate in the synthesis of ABO blood group antigens. H antigen is essential for maturation of the glomerular layer of the main olfactory bulb, in cell migration and early cell-cell contacts during tumor associated angiogenesis. Preferentially fucosylates soluble lactose and to a lesser extent, fucosylates glycolipids gangliosides GA1 and GM1a. The protein is Galactoside alpha-(1,2)-fucosyltransferase 1 of Bos taurus (Bovine).